Here is a 486-residue protein sequence, read N- to C-terminus: RAC-beta serine/threonine-protein kinase A (486 aa).

The PH domain occupies 5 to 110; the sequence is MVIKEGWLQK…WIIAIQTVAN (106 aa). Residues serine 133 and serine 136 are each glycosylated (O-linked (GlcNAc) serine). Residues 157–414 form the Protein kinase domain; it reads FDYLKLLGKG…AQEVMSHRFF (258 aa). Residues 163-171 and lysine 186 contribute to the ATP site; that span reads LGKGTFGKV. The Proton acceptor role is filled by aspartate 280. O-linked (GlcNAc) threonine glycosylation is present at threonine 311. Threonine 314 bears the Phosphothreonine mark. Threonine 318 carries an O-linked (GlcNAc) threonine glycan. Residues 415 to 486 enclose the AGC-kinase C-terminal domain; the sequence is VSINWQDVTE…QFSYSASIRE (72 aa). Residues 455-486 are disordered; that stretch reads LTPPDRYDNLDALESDQRPHFPQFSYSASIRE. Residues 459–473 are compositionally biased toward basic and acidic residues; the sequence is DRYDNLDALESDQRP. Serine 479 carries the phosphoserine modification. O-linked (GlcNAc) serine; alternate glycosylation occurs at serine 479.

It belongs to the protein kinase superfamily. AGC Ser/Thr protein kinase family. RAC subfamily. In terms of processing, phosphorylation on Thr-314 and Ser-479 is required for full activity. Phosphorylation of the activation loop at Thr-314 by PDPK1/PDK1 is a prerequisite for full activation. Phosphorylation by mTORC2 at Ser-479 in response to growth factors plays a key role in AKT1 activation by facilitating subsequent phosphorylation of the activation loop by PDPK1/PDK1.

The enzyme catalyses L-seryl-[protein] + ATP = O-phospho-L-seryl-[protein] + ADP + H(+). It carries out the reaction L-threonyl-[protein] + ATP = O-phospho-L-threonyl-[protein] + ADP + H(+). With respect to regulation, two specific sites, one in the kinase domain (Thr-314) and the other in the C-terminal regulatory region (Ser-479), need to be phosphorylated for its full activation. Akt2-a is one of several closely related serine/threonine-protein kinases known as the AKT kinase, and which regulate many processes including metabolism, proliferation, cell survival, growth and angiogenesis. This is mediated through serine and/or threonine phosphorylation of a range of downstream substrates. Over 100 substrate candidates have been reported so far, but for most of them, no isoform specificity has been reported. May be involved in the inhibition of ciliogenesis. This Xenopus laevis (African clawed frog) protein is RAC-beta serine/threonine-protein kinase A (akt2-a).